Consider the following 403-residue polypeptide: Protein Bel-2 (403 aa).

This sequence belongs to the spumavirus protein Bel-2 family.

The chain is Protein Bel-2 (bel2) from Homo sapiens (Human).